Here is a 132-residue protein sequence, read N- to C-terminus: Small ribosomal subunit protein eS17B (132 aa).

Ser-43 is modified (phosphoserine).

This sequence belongs to the eukaryotic ribosomal protein eS17 family. Component of the small ribosomal subunit (SSU). Mature yeast ribosomes consist of a small (40S) and a large (60S) subunit. The 40S small subunit contains 1 molecule of ribosomal RNA (18S rRNA) and at least 33 different proteins. The large 60S subunit contains 3 rRNA molecules (25S, 5.8S and 5S rRNA) and at least 46 different proteins.

Its subcellular location is the cytoplasm. Functionally, component of the ribosome, a large ribonucleoprotein complex responsible for the synthesis of proteins in the cell. The small ribosomal subunit (SSU) binds messenger RNAs (mRNAs) and translates the encoded message by selecting cognate aminoacyl-transfer RNA (tRNA) molecules. The large subunit (LSU) contains the ribosomal catalytic site termed the peptidyl transferase center (PTC), which catalyzes the formation of peptide bonds, thereby polymerizing the amino acids delivered by tRNAs into a polypeptide chain. The nascent polypeptides leave the ribosome through a tunnel in the LSU and interact with protein factors that function in enzymatic processing, targeting, and the membrane insertion of nascent chains at the exit of the ribosomal tunnel. This is Small ribosomal subunit protein eS17B (rps1702) from Schizosaccharomyces pombe (strain 972 / ATCC 24843) (Fission yeast).